The sequence spans 145 residues: uncharacterized protein (145 aa).

The interval 1-59 (MSTGTPHYAADRSKSRKSNNNRSIPFRTPTTQKVVKTSIRLGPVNPPTPTRNTQGGHGF) is disordered.

This is an uncharacterized protein from Caenorhabditis elegans.